Consider the following 556-residue polypeptide: Formate--tetrahydrofolate ligase (556 aa).

65-72 (TPAGEGKT) is an ATP binding site.

Belongs to the formate--tetrahydrofolate ligase family.

It catalyses the reaction (6S)-5,6,7,8-tetrahydrofolate + formate + ATP = (6R)-10-formyltetrahydrofolate + ADP + phosphate. It functions in the pathway one-carbon metabolism; tetrahydrofolate interconversion. The sequence is that of Formate--tetrahydrofolate ligase from Ruminiclostridium cellulolyticum (strain ATCC 35319 / DSM 5812 / JCM 6584 / H10) (Clostridium cellulolyticum).